The chain runs to 294 residues: 4-hydroxy-tetrahydrodipicolinate synthase (294 aa).

T47 provides a ligand contact to pyruvate. Catalysis depends on Y135, which acts as the Proton donor/acceptor. The active-site Schiff-base intermediate with substrate is the K163. I205 contributes to the pyruvate binding site.

This sequence belongs to the DapA family. Homotetramer; dimer of dimers.

It localises to the cytoplasm. The catalysed reaction is L-aspartate 4-semialdehyde + pyruvate = (2S,4S)-4-hydroxy-2,3,4,5-tetrahydrodipicolinate + H2O + H(+). The protein operates within amino-acid biosynthesis; L-lysine biosynthesis via DAP pathway; (S)-tetrahydrodipicolinate from L-aspartate: step 3/4. Functionally, catalyzes the condensation of (S)-aspartate-beta-semialdehyde [(S)-ASA] and pyruvate to 4-hydroxy-tetrahydrodipicolinate (HTPA). The chain is 4-hydroxy-tetrahydrodipicolinate synthase from Rickettsia prowazekii (strain Madrid E).